The primary structure comprises 446 residues: Argininosuccinate lyase (446 aa).

It belongs to the lyase 1 family. Argininosuccinate lyase subfamily.

Its subcellular location is the cytoplasm. It carries out the reaction 2-(N(omega)-L-arginino)succinate = fumarate + L-arginine. It participates in amino-acid biosynthesis; L-arginine biosynthesis; L-arginine from L-ornithine and carbamoyl phosphate: step 3/3. The protein is Argininosuccinate lyase of Parabacteroides distasonis (strain ATCC 8503 / DSM 20701 / CIP 104284 / JCM 5825 / NCTC 11152).